The chain runs to 286 residues: Orotidine 5'-phosphate decarboxylase (286 aa).

Substrate contacts are provided by residues aspartate 35, 57–59 (KTH), 89–98 (DRKFADIGNT), tyrosine 239, and arginine 257. The active-site Proton donor is lysine 91.

Belongs to the OMP decarboxylase family.

The enzyme catalyses orotidine 5'-phosphate + H(+) = UMP + CO2. It functions in the pathway pyrimidine metabolism; UMP biosynthesis via de novo pathway; UMP from orotate: step 2/2. This Yarrowia lipolytica (strain CLIB 122 / E 150) (Yeast) protein is Orotidine 5'-phosphate decarboxylase (URA3).